Here is a 600-residue protein sequence, read N- to C-terminus: Elongation factor 4 (600 aa).

The region spanning 5 to 187 (KYIRNFSIIA…AIVNKLPPPK (183 aa)) is the tr-type G domain. Residues 17–22 (DHGKST) and 134–137 (NKID) each bind GTP.

It belongs to the TRAFAC class translation factor GTPase superfamily. Classic translation factor GTPase family. LepA subfamily.

The protein resides in the cell inner membrane. It carries out the reaction GTP + H2O = GDP + phosphate + H(+). Functionally, required for accurate and efficient protein synthesis under certain stress conditions. May act as a fidelity factor of the translation reaction, by catalyzing a one-codon backward translocation of tRNAs on improperly translocated ribosomes. Back-translocation proceeds from a post-translocation (POST) complex to a pre-translocation (PRE) complex, thus giving elongation factor G a second chance to translocate the tRNAs correctly. Binds to ribosomes in a GTP-dependent manner. This chain is Elongation factor 4, found in Rickettsia bellii (strain OSU 85-389).